We begin with the raw amino-acid sequence, 233 residues long: Orotidine 5'-phosphate decarboxylase (233 aa).

Residues Asp-9, Lys-31, 58–67, Thr-120, Arg-182, Gln-191, Gly-211, and Arg-212 each bind substrate; that span reads DLKLHDIPNT. The active-site Proton donor is Lys-60.

It belongs to the OMP decarboxylase family. Type 1 subfamily. In terms of assembly, homodimer.

It carries out the reaction orotidine 5'-phosphate + H(+) = UMP + CO2. It participates in pyrimidine metabolism; UMP biosynthesis via de novo pathway; UMP from orotate: step 2/2. Functionally, catalyzes the decarboxylation of orotidine 5'-monophosphate (OMP) to uridine 5'-monophosphate (UMP). This chain is Orotidine 5'-phosphate decarboxylase, found in Listeria monocytogenes serotype 4b (strain CLIP80459).